Here is a 571-residue protein sequence, read N- to C-terminus: Hemagglutinin-neuraminidase (571 aa).

The Intravirion portion of the chain corresponds to 1–26 (MDRAVNRVVLENEEREAKNTWRLVFR). A helical transmembrane segment spans residues 27–47 (IAVLLLMVMTLAISAAALVYS). At 48 to 571 (MGASTPRDLA…LVEILKDDRV (524 aa)) the chain is on the virion surface side. N119 carries an N-linked (GlcNAc...) asparagine; by host glycan. Residues 124–152 (GEPVHDPDYIGGIGKELIVDDISDVTSFY) are important for interaction with fusion/F protein. Disulfide bonds link C172-C196, C186-C247, and C238-C251. An involved in neuraminidase activity region spans residues 234–239 (NRKSCS). N341 and N433 each carry an N-linked (GlcNAc...) asparagine; by host glycan. Cystine bridges form between C344/C461 and C455/C465. 3 N-linked (GlcNAc...) asparagine; by host glycosylation sites follow: N481, N508, and N538. C531 and C542 are joined by a disulfide.

The protein belongs to the paramyxoviruses hemagglutinin-neuraminidase family. In terms of assembly, homotetramer; composed of disulfide-linked homodimers. Interacts with F protein trimer. Interacts with host CG-1B; this interaction inhibits viral adsorption and replication rather than internalization.

The protein localises to the virion membrane. Its subcellular location is the host cell membrane. The enzyme catalyses Hydrolysis of alpha-(2-&gt;3)-, alpha-(2-&gt;6)-, alpha-(2-&gt;8)- glycosidic linkages of terminal sialic acid residues in oligosaccharides, glycoproteins, glycolipids, colominic acid and synthetic substrates.. Its function is as follows. Mediates the viral entry into the host cell together with fusion/F protein. Attaches the virus to sialic acid-containing cell receptors and thereby initiates infection. Binding of HN protein to the receptor induces a conformational change that allows the F protein to trigger virion/cell membranes fusion. Functionally, neuraminidase activity ensures the efficient spread of the virus by dissociating the mature virions from the neuraminic acid containing glycoproteins. The chain is Hemagglutinin-neuraminidase (HN) from Gallus gallus (Chicken).